The chain runs to 443 residues: Thymidine phosphorylase (443 aa).

The protein belongs to the thymidine/pyrimidine-nucleoside phosphorylase family. As to quaternary structure, homodimer.

The catalysed reaction is thymidine + phosphate = 2-deoxy-alpha-D-ribose 1-phosphate + thymine. The protein operates within pyrimidine metabolism; dTMP biosynthesis via salvage pathway; dTMP from thymine: step 1/2. The enzymes which catalyze the reversible phosphorolysis of pyrimidine nucleosides are involved in the degradation of these compounds and in their utilization as carbon and energy sources, or in the rescue of pyrimidine bases for nucleotide synthesis. The sequence is that of Thymidine phosphorylase from Aeromonas salmonicida (strain A449).